We begin with the raw amino-acid sequence, 336 residues long: MKHLLKAGALVALACIVTLTAGAQAHAAKRINIRLAHPMAPGNNVTVGYEKFKELVAEKSNGRVRIQLFGNCMLGSDRVTMEAAQRGTLEMASSSSPNMANFSKQWMVFDLPYITSPEHQQKLYKAIDDGELGKKLDEIAASIGLKPIMYSEYGYRNFVTTKKPIKTADDLKNLKVRTTDSPIEVAVAAALGMAPTPISWGETYTALQQGTVDGEGNTFSLLNDAKHTEVLKYAIDSAHNYSMHLLMMNKAYYDSLPANVQQILTEAGREALTYQRSITSELEKKAEDAFIEQGITVTRLSPEERAKLVERTRPVWDKFKDDIPAELIKLVQETQQ.

The signal sequence occupies residues 1 to 23; the sequence is MKHLLKAGALVALACIVTLTAGA.

Belongs to the bacterial solute-binding protein 7 family. The complex comprises the periplasmic solute receptor protein DctP, and the fused transmembrane protein DctMQ.

It localises to the periplasm. The catalysed reaction is 2-hydroxyethane-1-sulfonate(out) + Na(+)(out) = 2-hydroxyethane-1-sulfonate(in) + Na(+)(in). It functions in the pathway organosulfur degradation; alkanesulfonate degradation. Part of the tripartite ATP-independent periplasmic (TRAP) transport system DctPQM involved in the uptake of isethionate (2-hydroxyethanesulfonate), which is then catabolized by enzymes encoded by adjacent genes in the locus. The DctP subunit is the solute-binding protein. Thereby is involved in an anaerobic respiration pathway that converts the sulfonate isethionate to ammonia, acetate and sulfide. This is Isethionate-binding periplasmic protein DctP from Oleidesulfovibrio alaskensis (strain ATCC BAA-1058 / DSM 17464 / G20) (Desulfovibrio alaskensis).